We begin with the raw amino-acid sequence, 306 residues long: Probable pinoresinol-lariciresinol reductase 3 (306 aa).

NADP(+)-binding positions include 14–20 (GATGRLG), Arg39, and Lys46. Lys131 acts as the Proton acceptor in catalysis. Arg135 is an NADP(+) binding site.

Belongs to the NmrA-type oxidoreductase family. Isoflavone reductase subfamily. In terms of assembly, dimer.

Functionally, probable reductase that might be involved in the reduction of lariciresinol into secoisolariciresinol. In most plant species, a single enzyme is able to reduce both pinoresinol and lariciresinol efficiently while in Arabidopsis, PRR1 and PRR2 show a strict substrate selectivity for pinoresinol. The polypeptide is Probable pinoresinol-lariciresinol reductase 3 (PLR3) (Arabidopsis thaliana (Mouse-ear cress)).